A 214-amino-acid chain; its full sequence is Probable GTP-binding protein EngB (214 aa).

In terms of domain architecture, EngB-type G spans 22 to 194 (NLPEIAFAGR…WARIDALLSP (173 aa)). Residues 30–37 (GRSNVGKS), 57–61 (GRTQL), 75–78 (DLPG), 142–145 (TKCD), and 173–175 (FSA) each bind GTP. The Mg(2+) site is built by Ser-37 and Thr-59.

Belongs to the TRAFAC class TrmE-Era-EngA-EngB-Septin-like GTPase superfamily. EngB GTPase family. Mg(2+) is required as a cofactor.

Necessary for normal cell division and for the maintenance of normal septation. This chain is Probable GTP-binding protein EngB, found in Citrifermentans bemidjiense (strain ATCC BAA-1014 / DSM 16622 / JCM 12645 / Bem) (Geobacter bemidjiensis).